The primary structure comprises 33 residues: Photosystem II reaction center protein Psb30 (33 aa).

The chain crosses the membrane as a helical span at residues 8–28 (QLGSLLLITVAGPLIVFFLFI).

This sequence belongs to the Psb30/Ycf12 family. As to quaternary structure, PSII is composed of 1 copy each of membrane proteins PsbA, PsbB, PsbC, PsbD, PsbE, PsbF, PsbH, PsbI, PsbJ, PsbK, PsbL, PsbM, PsbT, PsbY, PsbZ, Psb30/Ycf12, peripheral proteins of the oxygen-evolving complex and a large number of cofactors. It forms dimeric complexes.

It is found in the plastid. The protein localises to the chloroplast thylakoid membrane. Its function is as follows. A core subunit of photosystem II (PSII), probably helps stabilize the reaction center. This chain is Photosystem II reaction center protein Psb30, found in Euglena anabaena (Euglenaria anabaena).